A 290-amino-acid polypeptide reads, in one-letter code: Aquaporin-3 (290 aa).

The Cytoplasmic portion of the chain corresponds to 1-24 (MGRQKELVTRCGEMLHIRYRLLRQ). A helical membrane pass occupies residues 25–42 (ALAECLGTLILVMFGCGS). At 43–56 (VAQVVLSRGTHGGF) the chain is on the extracellular side. Residues 57–74 (LTINLAFGFAVTLGILVA) form a helical membrane-spanning segment. Residues 75 to 78 (GQVS) lie on the Cytoplasmic side of the membrane. Positions 79-92 (GAHLNPAVTFAMCF) form an intramembrane region, discontinuously helical. An NPA 1 motif is present at residues 83–85 (NPA). The Cytoplasmic portion of the chain corresponds to 93–100 (LAREPWIK). A helical membrane pass occupies residues 101 to 121 (LPVYTLAQTLGAFLGAGIIFG). The Extracellular segment spans residues 122–159 (LYYDAIWAFANNQLIVSGPNGTAGIFATYPSGHLDMVN). The N-linked (GlcNAc...) asparagine glycan is linked to N141. The chain crosses the membrane as a helical span at residues 160–177 (GFFDQFIGTASLIVCVLA). Over 178-189 (IVDPNNNPVPRG) the chain is Cytoplasmic. The chain crosses the membrane as a helical span at residues 190-206 (LEAFTVGLVVLVIGTSM). The Extracellular segment spans residues 207–210 (GFNS). An intramembrane region (discontinuously helical) is located at residues 211-224 (GYAVNPARDFGPRL). The short motif at 215-217 (NPA) is the NPA 2 element. At 225–242 (FTAIAGWGSEVFTTGRHW) the chain is on the extracellular side. A helical transmembrane segment spans residues 243–264 (WWVPIASPLLGSIAGVFVYQLM). Topologically, residues 265–290 (IGCHLEPPPPSTDEENVKLSQVKHKE) are cytoplasmic.

This sequence belongs to the MIP/aquaporin (TC 1.A.8) family. In terms of assembly, homotetramer; each monomer provides an independent glycerol/water pore. Could also exist in other oligomeric states. Highly expressed in stomach and spleen, with lower expression in kidney and lung.

The protein resides in the cell membrane. The protein localises to the basolateral cell membrane. It catalyses the reaction glycerol(in) = glycerol(out). The enzyme catalyses H2O(in) = H2O(out). The catalysed reaction is urea(in) = urea(out). It carries out the reaction H2O2(out) = H2O2(in). Aquaglyceroporins form homotetrameric transmembrane channels, with each monomer independently mediating glycerol and water transport across the plasma membrane along their osmotic gradient. Could also be permeable to urea. Also participates in cell permeability to H2O2 and H2O2-mediated signaling. In skin, transports glycerol to the epidermis and stratum corneum, where it maintains hydration, elasticity, and supports lipid biosynthesis for barrier repair. In kidney, contributes to the reabsorption of water, helping the body maintain proper fluid balance. This chain is Aquaporin-3, found in Sus scrofa (Pig).